The sequence spans 355 residues: UDP-N-acetylglucosamine--N-acetylmuramyl-(pentapeptide) pyrophosphoryl-undecaprenol N-acetylglucosamine transferase (355 aa).

Residues 14–16, Asn-126, Arg-162, Ser-190, Ile-244, and Gln-289 contribute to the UDP-N-acetyl-alpha-D-glucosamine site; that span reads TGG.

Belongs to the glycosyltransferase 28 family. MurG subfamily.

Its subcellular location is the cell inner membrane. It catalyses the reaction di-trans,octa-cis-undecaprenyl diphospho-N-acetyl-alpha-D-muramoyl-L-alanyl-D-glutamyl-meso-2,6-diaminopimeloyl-D-alanyl-D-alanine + UDP-N-acetyl-alpha-D-glucosamine = di-trans,octa-cis-undecaprenyl diphospho-[N-acetyl-alpha-D-glucosaminyl-(1-&gt;4)]-N-acetyl-alpha-D-muramoyl-L-alanyl-D-glutamyl-meso-2,6-diaminopimeloyl-D-alanyl-D-alanine + UDP + H(+). It functions in the pathway cell wall biogenesis; peptidoglycan biosynthesis. Cell wall formation. Catalyzes the transfer of a GlcNAc subunit on undecaprenyl-pyrophosphoryl-MurNAc-pentapeptide (lipid intermediate I) to form undecaprenyl-pyrophosphoryl-MurNAc-(pentapeptide)GlcNAc (lipid intermediate II). The polypeptide is UDP-N-acetylglucosamine--N-acetylmuramyl-(pentapeptide) pyrophosphoryl-undecaprenol N-acetylglucosamine transferase (Paracidovorax citrulli (strain AAC00-1) (Acidovorax citrulli)).